The sequence spans 266 residues: Interleukin-1 beta (266 aa).

Positions 1–113 (MATVPEPTNE…ETYDDDLLCD (113 aa)) are excised as a propeptide.

Belongs to the IL-1 family. Monomer. In its precursor form, weakly interacts with full-length MEFV; the mature cytokine does not interact at all. Interacts with integrins ITGAV:ITGBV and ITGA5:ITGB1; integrin-binding is required for IL1B signaling. Interacts with cargo receptor TMED10; the interaction is direct and is required for the secretion of IL1B mature form. Interacts with HSP90AB1; the interaction facilitates cargo translocation into the ERGIC. Interacts with HSP90B1; the interaction facilitates cargo translocation into the ERGIC.

It is found in the cytoplasm. The protein resides in the cytosol. It localises to the secreted. Its subcellular location is the lysosome. The protein localises to the extracellular exosome. Potent pro-inflammatory cytokine. Initially discovered as the major endogenous pyrogen, induces prostaglandin synthesis, neutrophil influx and activation, T-cell activation and cytokine production, B-cell activation and antibody production, and fibroblast proliferation and collagen production. Promotes Th17 differentiation of T-cells. Synergizes with IL12/interleukin-12 to induce IFNG synthesis from T-helper 1 (Th1) cells. Plays a role in angiogenesis by inducing VEGF production synergistically with TNF and IL6. Involved in transduction of inflammation downstream of pyroptosis: its mature form is specifically released in the extracellular milieu by passing through the gasdermin-D (GSDMD) pore. In Delphinapterus leucas (Beluga whale), this protein is Interleukin-1 beta (IL1B).